The sequence spans 427 residues: Glutamyl-tRNA reductase (427 aa).

Residues 50–53 (TCNR), serine 110, 115–117 (ETQ), and glutamine 121 contribute to the substrate site. Cysteine 51 functions as the Nucleophile in the catalytic mechanism. An NADP(+)-binding site is contributed by 190–195 (GAGEMG).

This sequence belongs to the glutamyl-tRNA reductase family. Homodimer.

It carries out the reaction (S)-4-amino-5-oxopentanoate + tRNA(Glu) + NADP(+) = L-glutamyl-tRNA(Glu) + NADPH + H(+). It participates in porphyrin-containing compound metabolism; protoporphyrin-IX biosynthesis; 5-aminolevulinate from L-glutamyl-tRNA(Glu): step 1/2. Catalyzes the NADPH-dependent reduction of glutamyl-tRNA(Glu) to glutamate 1-semialdehyde (GSA). The protein is Glutamyl-tRNA reductase of Campylobacter concisus (strain 13826).